The sequence spans 173 residues: Crossover junction endodeoxyribonuclease RuvC (173 aa).

Residues D8, E67, and D139 contribute to the active site. D8, E67, and D139 together coordinate Mg(2+).

It belongs to the RuvC family. Homodimer which binds Holliday junction (HJ) DNA. The HJ becomes 2-fold symmetrical on binding to RuvC with unstacked arms; it has a different conformation from HJ DNA in complex with RuvA. In the full resolvosome a probable DNA-RuvA(4)-RuvB(12)-RuvC(2) complex forms which resolves the HJ. Mg(2+) is required as a cofactor.

It localises to the cytoplasm. The catalysed reaction is Endonucleolytic cleavage at a junction such as a reciprocal single-stranded crossover between two homologous DNA duplexes (Holliday junction).. Its function is as follows. The RuvA-RuvB-RuvC complex processes Holliday junction (HJ) DNA during genetic recombination and DNA repair. Endonuclease that resolves HJ intermediates. Cleaves cruciform DNA by making single-stranded nicks across the HJ at symmetrical positions within the homologous arms, yielding a 5'-phosphate and a 3'-hydroxyl group; requires a central core of homology in the junction. The consensus cleavage sequence is 5'-(A/T)TT(C/G)-3'. Cleavage occurs on the 3'-side of the TT dinucleotide at the point of strand exchange. HJ branch migration catalyzed by RuvA-RuvB allows RuvC to scan DNA until it finds its consensus sequence, where it cleaves and resolves the cruciform DNA. The chain is Crossover junction endodeoxyribonuclease RuvC from Photobacterium profundum (strain SS9).